A 580-amino-acid chain; its full sequence is uncharacterized protein (580 aa).

Positions 1–44 (MSESSVNADTPKNTNDVLNGAYQSATTEPEGQYRSATDNPSLYQ) are enriched in polar residues. Residues 1–45 (MSESSVNADTPKNTNDVLNGAYQSATTEPEGQYRSATDNPSLYQV) form a disordered region. A Phosphoserine modification is found at serine 99. Helical transmembrane passes span 143 to 163 (IYAY…PASA), 177 to 197 (LLNV…WAPM), 207 to 227 (LYIG…AQDI), 235 to 255 (FFGG…FADM), 265 to 285 (ITIF…VGGF), 295 to 315 (WTEY…YLFC), 370 to 390 (PIVF…YLLL), 405 to 425 (LGVS…GCGI), 450 to 470 (LPPM…LAWS), 476 to 496 (VHWI…LLIF), 511 to 533 (AASV…PLFA), and 546 to 566 (GSLL…FFFF).

This sequence belongs to the major facilitator superfamily. CAR1 family.

It is found in the membrane. This is an uncharacterized protein from Schizosaccharomyces pombe (strain 972 / ATCC 24843) (Fission yeast).